A 205-amino-acid polypeptide reads, in one-letter code: DNA-directed RNA polymerase subunit 5 (205 aa).

The protein belongs to the archaeal Rpo5/eukaryotic RPB5 RNA polymerase subunit family.

The protein localises to the virion. The enzyme catalyses RNA(n) + a ribonucleoside 5'-triphosphate = RNA(n+1) + diphosphate. Functionally, DNA-dependent RNA polymerase catalyzes the transcription of DNA into RNA using the four ribonucleoside triphosphates as substrates. The polypeptide is DNA-directed RNA polymerase subunit 5 (Acanthamoeba polyphaga (Amoeba)).